The sequence spans 177 residues: Peptidyl-tRNA hydrolase (177 aa).

Tyr-12 is a tRNA binding site. His-17 serves as the catalytic Proton acceptor. TRNA contacts are provided by Phe-63, Asn-65, and Asn-111.

Belongs to the PTH family. As to quaternary structure, monomer.

Its subcellular location is the cytoplasm. It carries out the reaction an N-acyl-L-alpha-aminoacyl-tRNA + H2O = an N-acyl-L-amino acid + a tRNA + H(+). Hydrolyzes ribosome-free peptidyl-tRNAs (with 1 or more amino acids incorporated), which drop off the ribosome during protein synthesis, or as a result of ribosome stalling. Functionally, catalyzes the release of premature peptidyl moieties from peptidyl-tRNA molecules trapped in stalled 50S ribosomal subunits, and thus maintains levels of free tRNAs and 50S ribosomes. The chain is Peptidyl-tRNA hydrolase from Buchnera aphidicola subsp. Acyrthosiphon pisum (strain 5A).